The sequence spans 397 residues: Probable inactive purple acid phosphatase 28 (397 aa).

Residues 1 to 30 form the signal peptide; that stretch reads MNCSIGNWKHTVLYLTLIVSLLYFIESLIS. Residues Asn-91 and Asn-209 are each glycosylated (N-linked (GlcNAc...) asparagine). The Zn(2+) site is built by His-266 and His-314. 314-316 contributes to the substrate binding site; it reads HDH. His-316 is a Fe cation binding site.

This sequence belongs to the metallophosphoesterase superfamily. Purple acid phosphatase family. In terms of assembly, homodimer. The cofactor is Fe cation. Requires Zn(2+) as cofactor. As to expression, expressed in roots, stems, leaves, flowers and siliques.

The protein resides in the secreted. The sequence is that of Probable inactive purple acid phosphatase 28 (PAP28) from Arabidopsis thaliana (Mouse-ear cress).